We begin with the raw amino-acid sequence, 367 residues long: Endophilin-A2 (367 aa).

The membrane-binding amphipathic helix stretch occupies residues 1–21 (MSVAGLKKQFYKASQLVSEKV). Positions 18 to 249 (SEKVGGAEGT…LKRRMREASS (232 aa)) constitute a BAR domain. The required for dimerization upon membrane association stretch occupies residues 60–87 (PNPASRAKLTMLNTMSKIRGQVKNPGYP). Residues 181–250 (EELRQAMEKF…KRRMREASSR (70 aa)) adopt a coiled-coil conformation. Residues 218 to 254 (LVDAQLDYHRQAVQILDELAEKLKRRMREASSRPRRE) form an interaction with ARC region. A disordered region spans residues 243 to 293 (RMREASSRPRREYKPKPRETYDFGESDQSNGGFSCTPTPKVSASSSFRSDK). Positions 245 to 263 (REASSRPRREYKPKPRETY) are enriched in basic and acidic residues. Residues 268–289 (SDQSNGGFSCTPTPKVSASSSF) are compositionally biased toward polar residues. In terms of domain architecture, SH3 spans 305-364 (LDQPCCKALYDFEPENDGELGFKEGDIITLTNQIDENWYEGMINGQSGFFPLNYVEVLVP).

The protein belongs to the endophilin family. Interacts with ARC. Interacts with SYNJ1 and DNM1. In terms of tissue distribution, highest level in central region of the theca of developing follicles (at protein level). Expressed at highest level in brain and testis, at high level in kidney, lung and stroma, low level in spleen and adrenal gland (at protein level). Expressed in most tissue with highest levels in small ovarian follicles, brain and testis.

It is found in the cytoplasm. The protein resides in the early endosome membrane. Its subcellular location is the cell projection. It localises to the podosome. Functionally, implicated in endocytosis. May recruit other proteins to membranes with high curvature. This chain is Endophilin-A2, found in Gallus gallus (Chicken).